A 499-amino-acid polypeptide reads, in one-letter code: Endoglucanase (499 aa).

The first 29 residues, 1–29, serve as a signal peptide directing secretion; that stretch reads MKRSISIFITCLLITLLTMGGMLASPASA. Residues His65, 69–70, Tyr96, and His131 contribute to the substrate site; that span reads WY. The active-site Proton donor is Glu169. Tyr231 contacts substrate. Catalysis depends on Glu257, which acts as the Nucleophile. Substrate is bound by residues 263–264, Trp291, and 296–298; these read AS and KQE. One can recognise a CBM3 domain in the interval 350-499; sequence QENGISVQYR…GKLIWGTEPN (150 aa).

It belongs to the glycosyl hydrolase 5 (cellulase A) family.

It carries out the reaction Endohydrolysis of (1-&gt;4)-beta-D-glucosidic linkages in cellulose, lichenin and cereal beta-D-glucans.. The sequence is that of Endoglucanase (bglC) from Bacillus subtilis.